Reading from the N-terminus, the 224-residue chain is Transcription factor MYB1 (224 aa).

HTH myb-type domains follow at residues 10–66 and 67–117; these read LGRV…KPSI and KRGH…YKKH. 2 DNA-binding regions (H-T-H motif) span residues 38 to 62 and 90 to 113; these read WKRV…LNYL and WSLI…NTHL.

The protein localises to the nucleus. Functionally, activates DODA1 and CYP76AD1 in the betalain red pigment pathway. This chain is Transcription factor MYB1, found in Beta vulgaris (Sugar beet).